We begin with the raw amino-acid sequence, 1218 residues long: Stress response protein nst1 (1218 aa).

A compositionally biased stretch (polar residues) spans 1 to 26 (MPANQRKNTSQSSYLQTPRNIATPLT). 8 disordered regions span residues 1 to 237 (MPAN…QEER), 306 to 391 (ANHQ…HATD), 431 to 508 (RMAR…RMEE), 544 to 745 (ELEE…KLSH), 765 to 810 (PIKL…PPGK), 911 to 1010 (PMHG…DTDE), 1018 to 1037 (ARRS…LPPP), and 1190 to 1218 (GAPG…IGGF). The span at 34–50 (TTPKKSSTSDSSETSPT) shows a compositional bias: low complexity. Polar residues predominate over residues 51-72 (MAQTTTKSNGQLPTPPTNNGAP). Over residues 75-85 (NRKKQKRRAKQ) the composition is skewed to basic residues. Residues 86–95 (AARAAAEQAQ) are compositionally biased toward low complexity. Residues 107-123 (DVKRQMQELEARFRETG) are compositionally biased toward basic and acidic residues. The span at 124–149 (LDEQYDDDEQFDPADENAYYSDEEGD) shows a compositional bias: acidic residues. Over residues 159 to 171 (GSSTNGYAIPTTN) the composition is skewed to polar residues. Residues 174-183 (KKQKKKKKSK) are compositionally biased toward basic residues. The span at 206–216 (SLPLPLQSPPS) shows a compositional bias: low complexity. Basic and acidic residues predominate over residues 224–237 (SKEKIWNTSSQEER). Residues 313–322 (GPPPMMPPPR) show a composition bias toward pro residues. Over residues 354 to 382 (LGDDEDEEGDEEYSEDDGDEDDFSEEEPE) the composition is skewed to acidic residues. A coiled-coil region spans residues 421 to 714 (IEMMEQLAER…EARELQKREE (294 aa)). Over residues 431-440 (RMAREEDAKE) the composition is skewed to basic and acidic residues. A compositionally biased stretch (acidic residues) spans 470–501 (PEEDEYDDEEDDEDEYDSQEEDYDEEEMDSMT). Positions 544 to 715 (ELEEESRADS…ARELQKREEL (172 aa)) are enriched in basic and acidic residues. Low complexity predominate over residues 716 to 730 (SAQQAAVQAAQSAAH). Residues 769–796 (RTNSQQDNYSIPRTPSSKYQSISPNSVT) are compositionally biased toward polar residues. The segment covering 799–810 (PNSPGPIGPPGK) has biased composition (pro residues). The span at 940-963 (PPSQTHSRNQSGSFDGLSSATQAQ) shows a compositional bias: polar residues.

Belongs to the NST1 family.

The protein resides in the cytoplasm. Functionally, may act as a negative regulator of salt tolerance. The sequence is that of Stress response protein nst1 (nst1) from Botryotinia fuckeliana (strain B05.10) (Noble rot fungus).